The chain runs to 1191 residues: Major DNA-binding protein (1191 aa).

The tract at residues 288 to 307 (ETTKGQSKMGKREGSDVSGG) is disordered. A zinc finger lies at 498–511 (CELCDKTSRIYCAH). The short motif at 841–842 (FW) is the Required for filament formation element. Residues 1166 to 1191 (KRPNMNVFDLEPIPEKRVPVLSVDML) are required for nuclear localization.

It belongs to the herpesviridae major DNA-binding protein family. As to quaternary structure, homooligomers. Forms double-helical filaments necessary for the formation of replication compartments within the host nucleus. Interacts with the origin-binding protein. Interacts with the helicase primase complex; this interaction stimulates primer synthesis activity of the helicase-primase complex. Interacts with the DNA polymerase. Interacts with the alkaline exonuclease; this interaction increases its nuclease processivity.

The protein resides in the host nucleus. Plays several crucial roles in viral infection. Participates in the opening of the viral DNA origin to initiate replication by interacting with the origin-binding protein. May disrupt loops, hairpins and other secondary structures present on ssDNA to reduce and eliminate pausing of viral DNA polymerase at specific sites during elongation. Promotes viral DNA recombination by performing strand-transfer, characterized by the ability to transfer a DNA strand from a linear duplex to a complementary single-stranded DNA circle. Can also catalyze the renaturation of complementary single strands. Additionally, reorganizes the host cell nucleus, leading to the formation of prereplicative sites and replication compartments. This process is driven by the protein which can form double-helical filaments in the absence of DNA. The sequence is that of Major DNA-binding protein from Gallid herpesvirus 2 (strain Chicken/Md5/ATCC VR-987) (GaHV-2).